The following is a 305-amino-acid chain: MLKQRTIKSLVKTVGIGLHSGRKVTLTLRPAPAGTGIVFTRVDLPEAVEIPVAASAIGDTRLASVLQKDGARVSTVEHLMSACAGLGIDNLYVDVDAEEIPIMDGSAASFVFLLQSAGIEEQNAPKTFIRVKKPVEVREGDKLARLEPFFGFKLSFTIDFRHPAVDKTGQTFSIDFADTSYVREIARARTFGFAHEVEALREMGLARGGSLDNAIVLDEHRMLNNEELRYGDEFVRHKILDAIGDLYVVGHPLIGAYVANKSGHGLNNQLLRALLADQEAYELVTFDRVEEAPAAFLPQAQPAFA.

3 residues coordinate Zn(2+): H78, H237, and D241. Residue H264 is the Proton donor of the active site.

Belongs to the LpxC family. The cofactor is Zn(2+).

It catalyses the reaction a UDP-3-O-[(3R)-3-hydroxyacyl]-N-acetyl-alpha-D-glucosamine + H2O = a UDP-3-O-[(3R)-3-hydroxyacyl]-alpha-D-glucosamine + acetate. It functions in the pathway glycolipid biosynthesis; lipid IV(A) biosynthesis; lipid IV(A) from (3R)-3-hydroxytetradecanoyl-[acyl-carrier-protein] and UDP-N-acetyl-alpha-D-glucosamine: step 2/6. Functionally, catalyzes the hydrolysis of UDP-3-O-myristoyl-N-acetylglucosamine to form UDP-3-O-myristoylglucosamine and acetate, the committed step in lipid A biosynthesis. The protein is UDP-3-O-acyl-N-acetylglucosamine deacetylase of Cupriavidus taiwanensis (strain DSM 17343 / BCRC 17206 / CCUG 44338 / CIP 107171 / LMG 19424 / R1) (Ralstonia taiwanensis (strain LMG 19424)).